Here is a 507-residue protein sequence, read N- to C-terminus: MVPIRADEIRNLIRERIEQYNREVKIVNTGTVLQVGDGIARIYGLNEVMAGELVEFEEGTIGIALNLESNNVGVVLMGAGLMIQEGSSVKATGRIVQIPVSEAYLGRVINALAKPIDGRGGISASESRLIESPAPGIISRRSVYEPLQTGLIAIDSMIPIGRGQRELIIGDRQTGKTAVATDTILNQQGKNVICVYVAIGQKASSVAQVVTTFQEKGAMEYTIVVAETAASPATLQYLAPYTGAALAEFFMYRERHTLIIYDDLSKQAQAYRQMSLLLRRPPGREAYPGDVFYLHSRLLERAAKSSSSLGEGSMTALPIVETQSGDVSAYIPTNVISITDGQIFLSADLFNSGIRPAINVGISVSRVGSAAQIKAMKQVAGKSKLDLAQFTELEAFAQFATDLDKTTQSQLARGRRLRELLKQSQADPLAVEEQIMTVYTGINGYLDSLEIGQVRKFLEDLRKYLKGNKPKFQEIISSTKTFTEEAEALLKEAIQEQTELFILKEQG.

Position 170–177 (G170–T177) interacts with ATP.

It belongs to the ATPase alpha/beta chains family. As to quaternary structure, F-type ATPases have 2 components, CF(1) - the catalytic core - and CF(0) - the membrane proton channel. CF(1) has five subunits: alpha(3), beta(3), gamma(1), delta(1), epsilon(1). CF(0) has four main subunits: a, b, b' and c.

It localises to the plastid. The protein resides in the chloroplast thylakoid membrane. The catalysed reaction is ATP + H2O + 4 H(+)(in) = ADP + phosphate + 5 H(+)(out). Produces ATP from ADP in the presence of a proton gradient across the membrane. The alpha chain is a regulatory subunit. The chain is ATP synthase subunit alpha, chloroplastic from Pelargonium hortorum (Common geranium).